A 264-amino-acid polypeptide reads, in one-letter code: Apolipoprotein A-I (264 aa).

Positions 1–18 (MKAVVLALAVLFLTGSQA) are cleaved as a signal peptide. A run of 2 repeats spans residues 67–88 (LHLL…EQLG) and 89–110 (PVTH…QEMN). The interval 67–264 (LHLLDNWDTL…DEASKKLNAQ (198 aa)) is 10 X approximate tandem repeats. At Met-109 the chain carries Methionine sulfoxide. The 3; half-length repeat unit spans residues 111–121 (KDLEEVKVKVQ). 5 consecutive repeat copies span residues 122 to 143 (PYLD…EKVG), 144 to 165 (PLGA…EKLT), 166 to 187 (PLGE…TQLA), 188 to 207 (PYSD…IRDS), and 208 to 229 (PSLA…EKAK). The 9; half-length repeat unit spans residues 230–240 (PALEDLRQGLM). Residues 241–264 (PVLENLKTTVLAAIDEASKKLNAQ) form repeat 10.

This sequence belongs to the apolipoprotein A1/A4/E family. Homodimer. Interacts with APOA1BP and CLU. Component of a sperm activating protein complex (SPAP), consisting of APOA1, an immunoglobulin heavy chain, an immunoglobulin light chain and albumin. Interacts with NDRG1. Interacts with SCGB3A2. Interacts with NAXE and YJEFN3. Glycosylated. Post-translationally, palmitoylated. In terms of processing, phosphorylation sites are present in the extracellular medium.

The protein resides in the secreted. In terms of biological role, participates in the reverse transport of cholesterol from tissues to the liver for excretion by promoting cholesterol efflux from tissues and by acting as a cofactor for the lecithin cholesterol acyltransferase (LCAT). As part of the SPAP complex, activates spermatozoa motility. In Jaculus jaculus (Lesser Egyptian jerboa), this protein is Apolipoprotein A-I (APOA1).